Reading from the N-terminus, the 249-residue chain is MAERGELDLTGAKQNTGVWLVKVPKYLSQQWAKAPGRGEVGKLRIAKNQGRTEVSFTLNEDLANIHDIGGKPASVSAPREHPFVLQSVGGQTLTVFTESSSDKLSLEGIVVQRAECRPAANENYMRLKRLQIEESSKPVRLSQQLDKVVTTNYKPVANHQYNIEYERKKKEDGKRARADKQHVLDMLFSAFEKHQYYNLKDLVDITKQPVSYLKDILKEIGVQNVKGIHKNTWELKPEYRHYQVEEKSD.

The residue at position 2 (A2) is an N-acetylalanine. K22, K33, and K137 each carry N6-acetyllysine. S142 is modified (phosphoserine). DNA is bound by residues G227 and H229. S248 bears the Phosphoserine mark.

This sequence belongs to the TFIIF beta subunit family. In terms of assembly, heterodimer of an alpha and a beta subunit. Interacts with HTATSF1 and GPBP1. Interacts with URI1. Interacts with GTF2B (via N-terminus); this interaction is inhibited in presence of GTF2F1. Part of TBP-based Pol II pre-initiation complex (PIC), in which Pol II core assembles with general transcription factors and other specific initiation factors including GTF2E1, GTF2E2, GTF2F1, GTF2F2, TCEA1, ERCC2, ERCC3, GTF2H2, GTF2H3, GTF2H4, GTF2H5, GTF2A1, GTF2A2, GTF2B and TBP; this large multi-subunit PIC complex mediates DNA unwinding and targets Pol II core to the transcription start site where the first phosphodiester bond forms.

The protein resides in the nucleus. Its function is as follows. TFIIF is a general transcription initiation factor that binds to RNA polymerase II and helps to recruit it to the initiation complex in collaboration with TFIIB. The chain is General transcription factor IIF subunit 2 (GTF2F2) from Bos taurus (Bovine).